Consider the following 141-residue polypeptide: Large-conductance mechanosensitive channel (141 aa).

2 consecutive transmembrane segments (helical) span residues 16–36 (VIDL…VDSL) and 86–106 (GNFI…FLMV).

This sequence belongs to the MscL family. In terms of assembly, homopentamer.

It localises to the cell inner membrane. In terms of biological role, channel that opens in response to stretch forces in the membrane lipid bilayer. May participate in the regulation of osmotic pressure changes within the cell. The protein is Large-conductance mechanosensitive channel of Ralstonia nicotianae (strain ATCC BAA-1114 / GMI1000) (Ralstonia solanacearum).